The following is a 254-amino-acid chain: Proteasome activator complex subunit 3 (254 aa).

2 positions are modified to N6-acetyllysine: Lys6 and Lys14. Lys195 carries the N6-acetyllysine; by P300/CBP modification.

In terms of assembly, homoheptamer. Post-translationally, acetylation at the major site Lys-195 is important for oligomerization and ability to degrade its target substrates. Deacetylated by SIRT1.

Implicated in immunoproteasome assembly and required for efficient antigen processing. The PA28 activator complex enhances the generation of class I binding peptides by altering the cleavage pattern of the proteasome. This is Proteasome activator complex subunit 3 from Gallus gallus (Chicken).